The primary structure comprises 391 residues: Alkanesulfonate monooxygenase (391 aa).

The protein belongs to the SsuD family.

It carries out the reaction an alkanesulfonate + FMNH2 + O2 = an aldehyde + FMN + sulfite + H2O + 2 H(+). Functionally, catalyzes the desulfonation of aliphatic sulfonates. This is Alkanesulfonate monooxygenase from Rhodopseudomonas palustris (strain ATCC BAA-98 / CGA009).